The primary structure comprises 2058 residues: Protein Daple (2058 aa).

Positions 11 to 131 (HFLESPLVTW…KILLLMLGCA (121 aa)) constitute a Calponin-homology (CH) domain. Coiled coils occupy residues 195–221 (HLKR…DYLQ), 247–428 (EDKK…SMNE), 455–1016 (ELNE…LRGA), 1043–1082 (ELLK…NLNL), and 1108–1388 (ANLQ…KFYD). Disordered stretches follow at residues 1406–1444 (LIKP…MRPL), 1480–1592 (HRMS…EDMI), 1617–1655 (TKNR…PGSE), 1696–1724 (LHPS…LPSA), 1831–1857 (YSAT…RGNS), 1940–1959 (LALP…ASSL), and 1988–2051 (PVRP…PQTV). Residues 1409 to 1418 (PKKEPSRESV) are compositionally biased toward basic and acidic residues. The segment covering 1419 to 1429 (KSPTDVQSKTM) has biased composition (polar residues). Positions 1494 to 1506 (GPEHLSRSRRMES) are enriched in basic and acidic residues. The span at 1552-1577 (NAGSSRVPWTSSLEVSRSASNSSSPL) shows a compositional bias: polar residues. 2 short sequence motifs (GBA) span residues 1653-1675 (GSEM…PSRR) and 1676-1697 (HSLN…ETLH). Residues 1831-1841 (YSATSSSQSPE) show a composition bias toward polar residues. Positions 2039 to 2048 (PASPDPSADP) are enriched in low complexity. The PDZ-binding signature appears at 2055 to 2058 (YGCV).

It belongs to the CCDC88 family. Interacts with dvl2/dsh via the PDZ-binding motif. In terms of tissue distribution, expressed weakly in gastrulae, with slightly stronger expression in the dorsal region. In neurulae, expressed in the neural plate with strong expression in the presumptive mesencephalic region. At the tailbud stage, expressed in somatic cells and in part of the tail. Also strongly expressed in regions of the head including eye vesicles, otic vesicles, olfactory placode and the pharyngeal cavity.

It localises to the cytoplasm. It is found in the cell junction. Functionally, positive regulator of Wnt signaling, acting synergistically with dvl2/dsh. Functions upstream of ctnnb1/beta-catenin in the canonical Wnt pathway, and also activates jnk in the Wnt/planar cell polarity (PCP) pathway. Acts as a non-receptor guanine nucleotide exchange factor which binds to and activates guanine nucleotide-binding protein G(i) alpha subunits. This promotes apical cell constriction and subsequent bending of the neural plate during neurulation via arhgef18. This is Protein Daple (ccdc88c) from Xenopus laevis (African clawed frog).